We begin with the raw amino-acid sequence, 545 residues long: Bifunctional purine biosynthesis protein PurH (545 aa).

Residues 1–150 (MTNTNRPIRR…KNHATVAIVT (150 aa)) enclose the MGS-like domain.

It belongs to the PurH family.

It catalyses the reaction (6R)-10-formyltetrahydrofolate + 5-amino-1-(5-phospho-beta-D-ribosyl)imidazole-4-carboxamide = 5-formamido-1-(5-phospho-D-ribosyl)imidazole-4-carboxamide + (6S)-5,6,7,8-tetrahydrofolate. The catalysed reaction is IMP + H2O = 5-formamido-1-(5-phospho-D-ribosyl)imidazole-4-carboxamide. Its pathway is purine metabolism; IMP biosynthesis via de novo pathway; 5-formamido-1-(5-phospho-D-ribosyl)imidazole-4-carboxamide from 5-amino-1-(5-phospho-D-ribosyl)imidazole-4-carboxamide (10-formyl THF route): step 1/1. The protein operates within purine metabolism; IMP biosynthesis via de novo pathway; IMP from 5-formamido-1-(5-phospho-D-ribosyl)imidazole-4-carboxamide: step 1/1. The protein is Bifunctional purine biosynthesis protein PurH of Bifidobacterium longum (strain DJO10A).